Reading from the N-terminus, the 678-residue chain is Secretin ExeD (678 aa).

An N-terminal signal peptide occupies residues 1-25 (MINKGKGWRLATVAAALMMAGSAWA). Residues 26–122 (TEYSASFKNA…VVDETNPGIG (97 aa)) form an N0 region. The tract at residues 124-188 (EMVTRVVPVR…EVVRRVDKAG (65 aa)) is N1. Residues 189–264 (DQEVDIIKLK…MVRQLDRDLQ (76 aa)) are N2. Residues 267 to 348 (GNTRVFYLKY…ELEQVVAKLD (82 aa)) are N3. Residues 353–602 (QVLVEAIIVE…VFIRPTILRD (250 aa)) are secretin. The interval 604-678 (NVYSGISSNK…GVQPFVQGNK (75 aa)) is s domain.

It belongs to the bacterial secretin family. GSP D subfamily. Forms a cylindrical channel with 15 subunits.

It is found in the cell outer membrane. Functionally, involved in a type II secretion system (T2SS, formerly general secretion pathway, GSP) for the export of proteins. This subunit forms the outer membrane channel. This chain is Secretin ExeD (exeD), found in Aeromonas hydrophila.